The chain runs to 937 residues: Protein Niban 1 (937 aa).

Gly-2 carries N-myristoyl glycine lipidation. Phosphoserine is present on residues Ser-578, Ser-581, Ser-595, Ser-601, and Ser-646. Residues 584-595 show a composition bias toward polar residues; that stretch reads DLKTSMGSNQAS. 2 disordered regions span residues 584–710 and 724–891; these read DLKT…GSLR and SAPE…LGGN. Over residues 640–651 the composition is skewed to low complexity; the sequence is ASISGSSPPSGE. A compositionally biased stretch (polar residues) spans 655–681; the sequence is VSVSGVDNSAGNPLSADNSAGPLSSHL. Positions 688–701 are enriched in basic and acidic residues; it reads EPPKDEETAHKRPE. Ser-708 and Ser-768 each carry phosphoserine. Composition is skewed to polar residues over residues 802–817 and 855–869; these read PTSQ…NTSC and VTVT…SSNP.

It belongs to the Niban family. As to expression, detected in brain, lung, spleen and skeletal muscle. Expressed in small renal tumors but not in normal kidney.

Its subcellular location is the cytoplasm. It localises to the membrane. Regulates phosphorylation of a number of proteins involved in translation regulation including EIF2A, EIF4EBP1 and RPS6KB1. May be involved in the endoplasmic reticulum stress response. The polypeptide is Protein Niban 1 (Rattus norvegicus (Rat)).